The chain runs to 30 residues: Cycloviolacin-O2 (30 aa).

The cyclopeptide (Gly-Asn) cross-link spans 1-30 (GIPCGESCVWIPCISSAIGCSCKSKVCYRN). 3 disulfides stabilise this stretch: Cys4–Cys20, Cys8–Cys22, and Cys13–Cys27.

Post-translationally, this is a cyclic peptide.

In terms of biological role, probably participates in a plant defense mechanism. The protein is Cycloviolacin-O2 of Viola biflora (Yellow wood violet).